The sequence spans 59 residues: MAVQQNKKSPSKRGMHRSHDFLTAAPLAVEPSTGEVHLRHHVSPNGYYRGKKVVKTKND.

Disordered regions lie at residues methionine 1–threonine 23 and glutamate 35–aspartate 59. Positions arginine 49–aspartate 59 are enriched in basic residues.

This sequence belongs to the bacterial ribosomal protein bL32 family.

The chain is Large ribosomal subunit protein bL32 from Burkholderia ambifaria (strain MC40-6).